The primary structure comprises 357 residues: UDP-N-acetylglucosamine--N-acetylmuramyl-(pentapeptide) pyrophosphoryl-undecaprenol N-acetylglucosamine transferase (357 aa).

Residues 13-15 (TGG), asparagine 122, arginine 163, serine 191, and glutamine 288 each bind UDP-N-acetyl-alpha-D-glucosamine.

Belongs to the glycosyltransferase 28 family. MurG subfamily.

It localises to the cell inner membrane. It carries out the reaction di-trans,octa-cis-undecaprenyl diphospho-N-acetyl-alpha-D-muramoyl-L-alanyl-D-glutamyl-meso-2,6-diaminopimeloyl-D-alanyl-D-alanine + UDP-N-acetyl-alpha-D-glucosamine = di-trans,octa-cis-undecaprenyl diphospho-[N-acetyl-alpha-D-glucosaminyl-(1-&gt;4)]-N-acetyl-alpha-D-muramoyl-L-alanyl-D-glutamyl-meso-2,6-diaminopimeloyl-D-alanyl-D-alanine + UDP + H(+). It functions in the pathway cell wall biogenesis; peptidoglycan biosynthesis. In terms of biological role, cell wall formation. Catalyzes the transfer of a GlcNAc subunit on undecaprenyl-pyrophosphoryl-MurNAc-pentapeptide (lipid intermediate I) to form undecaprenyl-pyrophosphoryl-MurNAc-(pentapeptide)GlcNAc (lipid intermediate II). The protein is UDP-N-acetylglucosamine--N-acetylmuramyl-(pentapeptide) pyrophosphoryl-undecaprenol N-acetylglucosamine transferase of Gloeobacter violaceus (strain ATCC 29082 / PCC 7421).